A 476-amino-acid polypeptide reads, in one-letter code: Protein transport protein SEC61 subunit alpha (476 aa).

Topologically, residues 1-33 (MSSLRFLDLVKPFVPFLPEVQQPETKIPFNQKL) are cytoplasmic. Residues 34–54 (MWTGLTLLIFLVMSQMPLYGI) traverse the membrane as a helical segment. The Lumenal portion of the chain corresponds to 55–76 (VSSDTSDPLYWLRMMMASNRGT). The chain crosses the membrane as a helical span at residues 77-97 (LMELGITPIISSGMVFQLLAG). Over 98–119 (THMIDVNLDLKADRELYQTAQK) the chain is Cytoplasmic. A helical transmembrane segment spans residues 120-140 (LFAVILSIGTATVYVFTGLYG). Residues 141–146 (PPSDLG) are Lumenal-facing. Residues 147-167 (AGIVFLLILQLVVAGMIVILL) traverse the membrane as a helical segment. At 168-246 (DELLQKGYGL…YRQNLPNIMN (79 aa)) the chain is on the cytoplasmic side. A helical membrane pass occupies residues 247–267 (LLATLVVFAAVIYLQGFRVEI). The Lumenal segment spans residues 268–361 (PVKSSRQRGA…KDALLDPIHT (94 aa)). A helical membrane pass occupies residues 362–382 (AVYIAYMLTACAVFSKTWIEV). At 383–415 (SGSSPRDVAKQLKDQGLVMAGHREQSMYKELKR) the chain is on the cytoplasmic side. The helical transmembrane segment at 416 to 434 (IIPTAAAFGGACIGALSVA) threads the bilayer. Residues 435-440 (SDLMGA) are Lumenal-facing. Residues 441 to 458 (LGSGTGTLLAVTIIYGYF) traverse the membrane as a helical segment. Residues 459–476 (EIAAKEGDLQGMKGMIMG) lie on the Cytoplasmic side of the membrane.

Belongs to the SecY/SEC61-alpha family. Heterotrimeric complex composed of SEC61-alpha, SEC61-beta and SEC61-gamma.

The protein localises to the endoplasmic reticulum membrane. Functionally, appears to play a crucial role in the insertion of secretory and membrane polypeptides into the ER. It is required for assembly of membrane and secretory proteins and is essential for cell growth. It interacts with other membrane proteins required for protein translocation. Upon binding to SEC62/63 complex, secretory precursor polypeptides may engage SEC61 to begin membrane penetration event. A cycle of assembly and disassembly of SEC62/63 from SEC61 may govern the activity of the translocase. The polypeptide is Protein transport protein SEC61 subunit alpha (sec-61) (Neurospora crassa (strain ATCC 24698 / 74-OR23-1A / CBS 708.71 / DSM 1257 / FGSC 987)).